The chain runs to 923 residues: RNA polymerase-associated protein RapA (923 aa).

The Helicase ATP-binding domain maps to Glu162 to Glu332. Position 175–182 (Asp175–Thr182) interacts with ATP. A DEAH box motif is present at residues Asp278 to His281. The Helicase C-terminal domain maps to Lys443–Ser597.

Belongs to the SNF2/RAD54 helicase family. RapA subfamily. In terms of assembly, interacts with the RNAP. Has a higher affinity for the core RNAP than for the holoenzyme. Its ATPase activity is stimulated by binding to RNAP.

In terms of biological role, transcription regulator that activates transcription by stimulating RNA polymerase (RNAP) recycling in case of stress conditions such as supercoiled DNA or high salt concentrations. Probably acts by releasing the RNAP, when it is trapped or immobilized on tightly supercoiled DNA. Does not activate transcription on linear DNA. Probably not involved in DNA repair. This chain is RNA polymerase-associated protein RapA, found in Haemophilus influenzae (strain PittEE).